The sequence spans 198 residues: Probable chorismate pyruvate-lyase (198 aa).

Residues Arg73, Leu111, and Glu172 each coordinate substrate.

The protein belongs to the UbiC family.

It is found in the cytoplasm. The catalysed reaction is chorismate = 4-hydroxybenzoate + pyruvate. It functions in the pathway cofactor biosynthesis; ubiquinone biosynthesis. Its function is as follows. Removes the pyruvyl group from chorismate, with concomitant aromatization of the ring, to provide 4-hydroxybenzoate (4HB) for the ubiquinone pathway. The protein is Probable chorismate pyruvate-lyase of Burkholderia lata (strain ATCC 17760 / DSM 23089 / LMG 22485 / NCIMB 9086 / R18194 / 383).